The sequence spans 397 residues: Sexual differentiation process protein isp7 (397 aa).

The Fe2OG dioxygenase domain maps to 255 to 353; it reads PTTSIRLLRY…RYTIPFFLQG (99 aa).

Belongs to the iron/ascorbate-dependent oxidoreductase family.

This chain is Sexual differentiation process protein isp7 (isp7), found in Schizosaccharomyces pombe (strain 972 / ATCC 24843) (Fission yeast).